The chain runs to 74 residues: ATP synthase subunit 9, mitochondrial (74 aa).

The next 2 helical transmembrane spans lie at 8–28 (MGAGAATIALAGAAIGIGNVF) and 50–70 (ILGFALTEAIALFALMMAFLI).

Belongs to the ATPase C chain family. F-type ATPases have 2 components, CF(1) - the catalytic core - and CF(0) - the membrane proton channel. CF(1) has five subunits: alpha(3), beta(3), gamma(1), delta(1), epsilon(1). CF(0) has three main subunits: a, b and c.

The protein resides in the mitochondrion membrane. In terms of biological role, this protein is one of the chains of the nonenzymatic membrane component (F0) of mitochondrial ATPase. The chain is ATP synthase subunit 9, mitochondrial (ATP9) from Solanum tuberosum (Potato).